Consider the following 356-residue polypeptide: Heat-inducible transcription repressor HrcA (356 aa).

This sequence belongs to the HrcA family.

In terms of biological role, negative regulator of class I heat shock genes (grpE-dnaK-dnaJ and groELS operons). Prevents heat-shock induction of these operons. The sequence is that of Heat-inducible transcription repressor HrcA from Brucella abortus (strain S19).